A 71-amino-acid polypeptide reads, in one-letter code: Small ribosomal subunit protein bS21 (71 aa).

This sequence belongs to the bacterial ribosomal protein bS21 family.

In Shewanella woodyi (strain ATCC 51908 / MS32), this protein is Small ribosomal subunit protein bS21.